We begin with the raw amino-acid sequence, 84 residues long: Large ribosomal subunit protein bL27 (84 aa).

Residues 1-25 (MSHKKAGGSTRNGRDSNAQRRGVKK) form a disordered region.

Belongs to the bacterial ribosomal protein bL27 family.

The protein is Large ribosomal subunit protein bL27 of Desulforapulum autotrophicum (strain ATCC 43914 / DSM 3382 / VKM B-1955 / HRM2) (Desulfobacterium autotrophicum).